Consider the following 772-residue polypeptide: Acyl-homoserine lactone acylase PvdQ (772 aa).

An N-terminal signal peptide occupies residues 1–28 (MPVFPFCRPMTCAGLAAALVAFSVGVQA). A propeptide spans 199–220 (AQSSAGFASALARQERFAAERG) (spacer peptide). Catalysis depends on serine 221, which acts as the Nucleophile.

It belongs to the peptidase S45 family. Heterodimer of an alpha subunit and a beta subunit processed from the same precursor.

It localises to the periplasm. It catalyses the reaction an N-acyl-L-homoserine lactone + H2O = L-homoserine lactone + a carboxylate. Functionally, catalyzes the deacylation of acyl-homoserine lactone (AHL or acyl-HSL), releasing homoserine lactone (HSL) and the corresponding fatty acid. Possesses a specificity for the degradation of long-chain acyl-HSLs (side chains of 11 to 14 carbons in length). This is Acyl-homoserine lactone acylase PvdQ (pvdQ) from Pseudomonas putida (strain ATCC 47054 / DSM 6125 / CFBP 8728 / NCIMB 11950 / KT2440).